The following is a 145-amino-acid chain: Probable WRKY transcription factor 75 (145 aa).

Residues 20–38 (SKPELHQGEEESSKVRSEG) are compositionally biased toward basic and acidic residues. A disordered region spans residues 20-55 (SKPELHQGEEESSKVRSEGCSKSVESSKKKGKKQRY). The WRKY DNA-binding region spans 61 to 126 (SQVDILDDGY…YEGVHSHPIE (66 aa)).

This sequence belongs to the WRKY group II-c family.

The protein resides in the nucleus. Its function is as follows. Transcription factor. Interacts specifically with the W box (5'-(T)TGAC[CT]-3'), a frequently occurring elicitor-responsive cis-acting element. The polypeptide is Probable WRKY transcription factor 75 (WRKY75) (Arabidopsis thaliana (Mouse-ear cress)).